A 562-amino-acid chain; its full sequence is Arginine--tRNA ligase 1 (562 aa).

The 'HIGH' region motif lies at 122-132; the sequence is PNIAKPFSMGH.

It belongs to the class-I aminoacyl-tRNA synthetase family. Monomer.

It is found in the cytoplasm. It catalyses the reaction tRNA(Arg) + L-arginine + ATP = L-arginyl-tRNA(Arg) + AMP + diphosphate. The polypeptide is Arginine--tRNA ligase 1 (Bacillus thuringiensis subsp. konkukian (strain 97-27)).